A 332-amino-acid chain; its full sequence is UPF0194 membrane protein YbhG (332 aa).

The N-terminal stretch at 1–16 is a signal peptide; that stretch reads MMKKPVVIGLAVVVLA. Residues 108 to 211 are a coiled coil; that stretch reads EEIAQAAAAV…LQDSTLVAPS (104 aa).

This sequence belongs to the UPF0194 family.

It localises to the periplasm. The chain is UPF0194 membrane protein YbhG from Escherichia coli O6:H1 (strain CFT073 / ATCC 700928 / UPEC).